Here is a 2223-residue protein sequence, read N- to C-terminus: Protein CHROMATIN REMODELING 4 (2223 aa).

Residues 39–69 are disordered; the sequence is FDSPEYTSSSKPSKQRLKTDSTPERNSSKRK. Over residues 55–69 the composition is skewed to basic and acidic residues; it reads LKTDSTPERNSSKRK. The PHD-type zinc-finger motif lies at 75–122; sequence YFECVICDLGGDLLCCDSCPRTYHTACLNPPLKRIPNGKWICPKCSPN. 4 stretches are compositionally biased toward basic and acidic residues: residues 173 to 187, 207 to 223, 248 to 285, and 294 to 305; these read EKGK…KSTG, SADD…DDLG, ESKL…ETGK, and ELNDGESLERCK. Disordered stretches follow at residues 173–235, 248–381, and 441–474; these read EKGK…LPSD, ESKL…CLED, and AEDR…GTEG. A compositionally biased stretch (basic residues) spans 306–315; sequence TDKKRAKKSL. Over residues 353–368 the composition is skewed to basic and acidic residues; that stretch reads ETPEKVKKLPKEERRA. The segment covering 372–381 has biased composition (polar residues); sequence TNKSSSCLED. Basic and acidic residues predominate over residues 441-466; that stretch reads AEDRIDSSSETGKSSRDSRLRDKDMD. Chromo domains are found at residues 531–587 and 601–663; these read EEIE…YKAK and KQPQ…ERNS. One can recognise a Helicase ATP-binding domain in the interval 701–878; sequence RRCWHKSKNV…YNLLNFLQPS (178 aa). 714–721 contacts ATP; it reads DEMGLGKT. Positions 829-832 match the DEAH box motif; the sequence is DEGH. The short motif at 902-909 is the Nuclear localization signal element; the sequence is LKKLVAPH. In terms of domain architecture, Helicase C-terminal spans 1008–1167; the sequence is LLHSMLKVLH…GSQKEFEDIL (160 aa). Disordered stretches follow at residues 1268-1300, 1341-1380, 1394-1463, 1483-1511, 1760-1779, and 2006-2223; these read EETA…DDVV, EAYA…LKEK, RRNS…ECLP, SESS…FNLP, LSSL…SSLF, and IPPF…LSDD. The span at 1363-1380 shows a compositional bias: basic and acidic residues; the sequence is EPELKKEYTPAGRALKEK. Residues 1375-1402 are a coiled coil; sequence RALKEKFTKLRERQKNLIARRNSVEESL. A compositionally biased stretch (polar residues) spans 1403-1414; that stretch reads PSGNVDQVTEVA. Residues 2009 to 2019 are compositionally biased toward pro residues; that stretch reads FVIPEPPPPAP. The segment covering 2025–2035 has biased composition (basic residues); the sequence is SLRKKRKRKLH. 3 stretches are compositionally biased toward polar residues: residues 2039–2061, 2075–2096, and 2128–2148; these read QKTT…GNPQ, GETS…TEPL, and TGTT…TINQ. Residues 2157–2171 show a composition bias toward basic and acidic residues; it reads DEKVESERTPLHSDE. The stretch at 2189–2215 forms a coiled coil; the sequence is IEAESQNTNAEEEAEAQEEDEESMKMV. Residues 2198-2210 show a composition bias toward acidic residues; sequence AEEEAEAQEEDEE.

Belongs to the SNF2/RAD54 helicase family.

It localises to the nucleus. Its function is as follows. Chromatin-remodeling protein that binds DNA through histones and regulates gene transcription. May specifically recognize and bind trimethylated 'Lys-27' (H3K27me3) and non-methylated 'Lys-4' of histone H3. Probable chromatin remodeling factor. This Arabidopsis thaliana (Mouse-ear cress) protein is Protein CHROMATIN REMODELING 4.